A 208-amino-acid chain; its full sequence is Large ribosomal subunit protein bL25 (208 aa).

Residues 186–201 (PAGEKSAAAEEGAAAA) show a composition bias toward low complexity. Positions 186–208 (PAGEKSAAAEEGAAAAGEDKPAA) are disordered.

Belongs to the bacterial ribosomal protein bL25 family. CTC subfamily. Part of the 50S ribosomal subunit; part of the 5S rRNA/L5/L18/L25 subcomplex. Contacts the 5S rRNA. Binds to the 5S rRNA independently of L5 and L18.

Functionally, this is one of the proteins that binds to the 5S RNA in the ribosome where it forms part of the central protuberance. This chain is Large ribosomal subunit protein bL25, found in Ralstonia pickettii (strain 12J).